The chain runs to 398 residues: MGEMLNENTSSTSLSSFYVLENETIFNVQEEMEEDGSESGNIQKTLLEDPCPENVNDENEDEQNRSSRSSSPLVKHEQRHRMYNLKEVIKSFILTKSKEKPCDLEMGIDSIEMGRMQSFESDQQESHTGQANFPTDQEDPRNPQLDSQYEAFITQGESQTDKKKTSTVQEEELQNAGKKLETVQENPQAYSKVTQQEPQAGQKAVPQEPQANQQETSSNQEESSFDRQETQDDKQKPKTTQQEHYNLRNRNQATITNSNSKPQTRRSKIFVISLLGYGVYLLAFLDLIEYVSKEYGFEATVSAQIFLWCLFGVLMIARGLIYLALFRNFLNILKRMAIYCGACFWVYACIFFLTRVFCFLIDTPYPQFEKIPLEIYSIFAAINVYIIELGAIYCTSGR.

Disordered regions lie at residues 30–81 (EEME…QRHR) and 119–260 (FESD…NSNS). 2 stretches are compositionally biased toward polar residues: residues 119–135 (FESD…NFPT) and 183–199 (VQEN…QEPQ). The span at 210-222 (QANQQETSSNQEE) shows a compositional bias: low complexity. Positions 224-236 (SFDRQETQDDKQK) are enriched in basic and acidic residues. Residues 248–260 (RNRNQATITNSNS) are compositionally biased toward polar residues. A run of 4 helical transmembrane segments spans residues 269 to 289 (IFVI…DLIE), 305 to 325 (IFLW…YLAL), 341 to 361 (GACF…CFLI), and 373 to 393 (LEIY…GAIY).

The protein resides in the membrane. Its function is as follows. Has a role in meiosis. The protein is Meiotically up-regulated gene 126 protein (mug126) of Schizosaccharomyces pombe (strain 972 / ATCC 24843) (Fission yeast).